Reading from the N-terminus, the 353-residue chain is MEVDTATFVRLHHELLCAHEGPSIISKFDAIKKVKLGTLANQSGGANNITEAFFDKLRNFERKSEAYLASDLAERELTRDTHKAIVFVTKSVLLGGKSLKDLLPYGVIVCAFIFIPETASVLDNVRVMIGNQKRPLTVALIKYMAKSLNCDLVGDSYDTFYYCNSSAYGKNLISVSENDFSNPQRALLSVGDLCYQAARSIHVAAANYIRIFDRMPPGFQPSKHLFRIIGVLDMETLKTMVTSNIAREPGMFSHDNVKDVLHRTGVFSPNHHFSAVILWRGWASTYAYMFNQEQLNMLSGTSGLAGDFGKYKLTYGSTFDEGVIHVQSQFVTPEAVRKRNIYPDLSALKGGSS.

This sequence belongs to the phytoreovirus non-structural protein 10 family.

Functionally, suppressor of RNA-mediated gene silencing, also known as post-transcriptional gene silencing (PTGS), a mechanism of plant viral defense that limits the accumulation of viral RNAs. This Rice dwarf virus (isolate Fujian) (RDV) protein is Suppressor of RNA-mediated gene silencing.